The following is a 251-amino-acid chain: Small ribosomal subunit protein uS2 (251 aa).

An N-acetylserine modification is found at Ser2. The tract at residues 213 to 251 is disordered; it reads QVAEEATAAADEDVKEEVAEEQTEAADWAEGNTEEVASW. Residues 222–236 show a composition bias toward acidic residues; it reads ADEDVKEEVAEEQTE.

This sequence belongs to the universal ribosomal protein uS2 family. As to quaternary structure, component of the small ribosomal subunit. Mature ribosomes consist of a small (40S) and a large (60S) subunit. The 40S subunit contains about 33 different proteins and 1 molecule of RNA (18S). The 60S subunit contains about 49 different proteins and 3 molecules of RNA (25S, 5.8S and 5S). Interacts with RPS21.

The protein resides in the cytoplasm. Required for the assembly and/or stability of the 40S ribosomal subunit. Required for the processing of the 20S rRNA-precursor to mature 18S rRNA in a late step of the maturation of 40S ribosomal subunits. This chain is Small ribosomal subunit protein uS2, found in Lachancea thermotolerans (strain ATCC 56472 / CBS 6340 / NRRL Y-8284) (Yeast).